The chain runs to 90 residues: Small ribosomal subunit protein uS15 (90 aa).

The protein belongs to the universal ribosomal protein uS15 family. As to quaternary structure, part of the 30S ribosomal subunit. Forms a bridge to the 50S subunit in the 70S ribosome, contacting the 23S rRNA.

Its function is as follows. One of the primary rRNA binding proteins, it binds directly to 16S rRNA where it helps nucleate assembly of the platform of the 30S subunit by binding and bridging several RNA helices of the 16S rRNA. Forms an intersubunit bridge (bridge B4) with the 23S rRNA of the 50S subunit in the ribosome. In Wolbachia sp. subsp. Drosophila simulans (strain wRi), this protein is Small ribosomal subunit protein uS15.